A 276-amino-acid polypeptide reads, in one-letter code: Orotidine 5'-phosphate decarboxylase (276 aa).

K96 (proton donor) is an active-site residue.

It belongs to the OMP decarboxylase family. Type 2 subfamily.

The enzyme catalyses orotidine 5'-phosphate + H(+) = UMP + CO2. The protein operates within pyrimidine metabolism; UMP biosynthesis via de novo pathway; UMP from orotate: step 2/2. This chain is Orotidine 5'-phosphate decarboxylase, found in Porphyromonas gingivalis (strain ATCC 33277 / DSM 20709 / CIP 103683 / JCM 12257 / NCTC 11834 / 2561).